Reading from the N-terminus, the 295-residue chain is Bifunctional protein FolD (295 aa).

NADP(+) contacts are provided by residues 166–168, serine 195, and isoleucine 236; that span reads GRS.

The protein belongs to the tetrahydrofolate dehydrogenase/cyclohydrolase family. As to quaternary structure, homodimer.

It catalyses the reaction (6R)-5,10-methylene-5,6,7,8-tetrahydrofolate + NADP(+) = (6R)-5,10-methenyltetrahydrofolate + NADPH. The catalysed reaction is (6R)-5,10-methenyltetrahydrofolate + H2O = (6R)-10-formyltetrahydrofolate + H(+). The protein operates within one-carbon metabolism; tetrahydrofolate interconversion. In terms of biological role, catalyzes the oxidation of 5,10-methylenetetrahydrofolate to 5,10-methenyltetrahydrofolate and then the hydrolysis of 5,10-methenyltetrahydrofolate to 10-formyltetrahydrofolate. The polypeptide is Bifunctional protein FolD (Chlorobium phaeovibrioides (strain DSM 265 / 1930) (Prosthecochloris vibrioformis (strain DSM 265))).